Here is a 264-residue protein sequence, read N- to C-terminus: MSWGGFKKAINRAGASVIVKDVDKTMDKDFDVEERRYKTLKTAGTNLQKAAKGYLDNIRAITNSQVTIAEIIYNLYEESKQGQSLYSNVGTYYMQSVKEFDEETVKQIDGPYRETVLDPIGKFSNYFSEIDEAIKKRAHKKIDYEQCKAKVRRLVDKPAKDAAKLPRAEKELSMAKEIYDELNDQLKAELPQLIALRVPFYDPSFEALVKIQLRFCTEGYSRLAQIQQYLDPASRDEYANGLLDGKIDDMLAQMQGLSITSLGK.

A BAR domain is found at Ala-15–Ala-239.

Its subcellular location is the cytoplasm. It localises to the cytoskeleton. In terms of biological role, component of a cytoskeletal structure that is required for the formation of endocytic vesicles at the plasma membrane level. Plays an important role in virulence. The chain is Regulator of cytoskeleton and endocytosis RVS161 (RVS161) from Candida albicans (strain SC5314 / ATCC MYA-2876) (Yeast).